Here is a 347-residue protein sequence, read N- to C-terminus: Farnesyl pyrophosphate synthase (347 aa).

3 residues coordinate isopentenyl diphosphate: Lys-50, Arg-53, and Gln-88. Residues Asp-95 and Asp-99 each contribute to the Mg(2+) site. Arg-104 is a binding site for dimethylallyl diphosphate. Arg-105 contacts isopentenyl diphosphate. Dimethylallyl diphosphate is bound by residues Lys-192, Thr-193, Gln-232, Lys-249, and Lys-258.

Belongs to the FPP/GGPP synthase family. In terms of assembly, interacts with spo9. The cofactor is Mg(2+).

It is found in the cytoplasm. The protein localises to the nucleus. It carries out the reaction isopentenyl diphosphate + dimethylallyl diphosphate = (2E)-geranyl diphosphate + diphosphate. The catalysed reaction is isopentenyl diphosphate + (2E)-geranyl diphosphate = (2E,6E)-farnesyl diphosphate + diphosphate. The protein operates within isoprenoid biosynthesis; farnesyl diphosphate biosynthesis; farnesyl diphosphate from geranyl diphosphate and isopentenyl diphosphate: step 1/1. It participates in isoprenoid biosynthesis; geranyl diphosphate biosynthesis; geranyl diphosphate from dimethylallyl diphosphate and isopentenyl diphosphate: step 1/1. Its function is as follows. Farnesyl pyrophosphate synthase; part of the second module of ergosterol biosynthesis pathway that includes the middle steps of the pathway. Fps1 catalyzes the sequential condensation of isopentenyl pyrophosphate with dimethylallyl pyrophosphate, and then with the resultant geranylpyrophosphate to the ultimate product farnesyl pyrophosphate. The second module is carried out in the vacuole and involves the formation of farnesyl diphosphate, which is also an important intermediate in the biosynthesis of ubiquinone, dolichol, heme and prenylated proteins. Activity by the mevalonate kinase erg12 first converts mevalonate into 5-phosphomevalonate. 5-phosphomevalonate is then further converted to 5-diphosphomevalonate by the phosphomevalonate kinase erg8. The diphosphomevalonate decarboxylase mvd1 then produces isopentenyl diphosphate. The isopentenyl-diphosphate delta-isomerase idi1 then catalyzes the 1,3-allylic rearrangement of the homoallylic substrate isopentenyl (IPP) to its highly electrophilic allylic isomer, dimethylallyl diphosphate (DMAPP). Finally the farnesyl diphosphate synthase fps1 catalyzes the sequential condensation of isopentenyl pyrophosphate with dimethylallyl pyrophosphate, and then with the resultant geranylpyrophosphate to the ultimate product farnesyl pyrophosphate. The chain is Farnesyl pyrophosphate synthase from Schizosaccharomyces pombe (strain 972 / ATCC 24843) (Fission yeast).